The sequence spans 1101 residues: Selenocysteine insertion sequence-binding protein 2-like (1101 aa).

Disordered regions lie at residues 154-206 (LGQV…AGPD), 240-295 (LWKS…PDSG), 320-387 (QKKP…SESL), 884-1010 (TSDG…ISVE), and 1030-1101 (TLQL…TQTT). Residues 255-265 (AESSSEQGASE) show a composition bias toward low complexity. Phosphoserine is present on serine 276. Residues 327-346 (KNQTFSRGGRQTEQRNNSQV) are compositionally biased toward polar residues. Basic and acidic residues-rich tracts occupy residues 356-371 (SSERRQNLQKRPDNKH) and 892-908 (ENEKEVSCKHSTSEKPS). Over residues 925–939 (ATGSTTSATSAGKST) the composition is skewed to low complexity. A compositionally biased stretch (basic and acidic residues) spans 940–950 (ASDKEEVKPDD). The span at 954–964 (ASQQSTETGSL) shows a compositional bias: polar residues. A compositionally biased stretch (acidic residues) spans 988–1002 (LEEEEDEDEEEEEDY). A compositionally biased stretch (polar residues) spans 1030–1039 (TLQLGKTLNG). Positions 1040–1057 (SEEDNVEQSGEEEAEAPE) are enriched in acidic residues. Residues 1070-1087 (ADQQASPGQQKSSNCSSL) are compositionally biased toward polar residues.

Its function is as follows. Binds SECIS (Sec insertion sequence) elements present on selenocysteine (Sec) protein mRNAs, but does not promote Sec incorporation into selenoproteins in vitro. The polypeptide is Selenocysteine insertion sequence-binding protein 2-like (SECISBP2L) (Homo sapiens (Human)).